The following is a 331-amino-acid chain: Elongation factor Ts, mitochondrial (331 aa).

The transit peptide at 1-14 (MIVSRQVIRSVVRK) directs the protein to the mitochondrion.

This sequence belongs to the EF-Ts family.

The protein localises to the mitochondrion. In terms of biological role, associates with the EF-Tu.GDP complex and induces the exchange of GDP to GTP. It remains bound to the aminoacyl-tRNA.EF-Tu.GTP complex up to the GTP hydrolysis stage on the ribosome. In Brugia malayi (Filarial nematode worm), this protein is Elongation factor Ts, mitochondrial.